We begin with the raw amino-acid sequence, 205 residues long: Peptidyl-prolyl cis-trans isomerase B (205 aa).

An N-terminal signal peptide occupies residues 1-20 (MKFSGLWCWLLLFLSVNVIA). The 160-residue stretch at 39 to 198 (FFDIEHGEEK…EAVKIAKCGE (160 aa)) folds into the PPIase cyclophilin-type domain.

The protein belongs to the cyclophilin-type PPIase family. PPIase B subfamily.

The protein localises to the secreted. The catalysed reaction is [protein]-peptidylproline (omega=180) = [protein]-peptidylproline (omega=0). Its activity is regulated as follows. Cyclosporin A (CsA) inhibits CYPB. Functionally, PPIases accelerate the folding of proteins. It catalyzes the cis-trans isomerization of proline imidic peptide bonds in oligopeptides. This is Peptidyl-prolyl cis-trans isomerase B (CPR2) from Saccharomyces cerevisiae (strain ATCC 204508 / S288c) (Baker's yeast).